A 292-amino-acid chain; its full sequence is MASISAKLVKELRDKIGVGMMDAKKALVATEGDMDKAVDFLREKGIAKAAKKSDRVAAEGLADVEMHDNTAAIVEVNSETDFVASNDRFIDLVKEIASQVALEKPADVDAALKLKSPKGTLNDDIIEATQVIGEKISLRRFATLEKGENEHFGSYLHMGGKIAALVLLEGADEETAKDVAMHVAAINPKYVNRDQVPAEVLDHEREVLSKEAEGEGKPANIIEKMVTGRLNKFLAEISLDDQEYVKDPDQTVAKYVASKGGKVKSFIRFEVGEGIEKQTVDFAEEVRKEMGQ.

An involved in Mg(2+) ion dislocation from EF-Tu region spans residues 80–83 (TDFV).

The protein belongs to the EF-Ts family.

It is found in the cytoplasm. In terms of biological role, associates with the EF-Tu.GDP complex and induces the exchange of GDP to GTP. It remains bound to the aminoacyl-tRNA.EF-Tu.GTP complex up to the GTP hydrolysis stage on the ribosome. The polypeptide is Elongation factor Ts (Pediococcus pentosaceus (strain ATCC 25745 / CCUG 21536 / LMG 10740 / 183-1w)).